Here is a 445-residue protein sequence, read N- to C-terminus: Glutamate-1-semialdehyde 2,1-aminomutase (445 aa).

At Lys281 the chain carries N6-(pyridoxal phosphate)lysine.

Belongs to the class-III pyridoxal-phosphate-dependent aminotransferase family. HemL subfamily. In terms of assembly, homodimer. The cofactor is pyridoxal 5'-phosphate.

It is found in the cytoplasm. It catalyses the reaction (S)-4-amino-5-oxopentanoate = 5-aminolevulinate. The protein operates within porphyrin-containing compound metabolism; protoporphyrin-IX biosynthesis; 5-aminolevulinate from L-glutamyl-tRNA(Glu): step 2/2. The protein is Glutamate-1-semialdehyde 2,1-aminomutase of Nocardioides sp. (strain ATCC BAA-499 / JS614).